The sequence spans 399 residues: Rhodopsin, G0-coupled (399 aa).

Over M1–S17 the chain is Extracellular. N-linked (GlcNAc...) asparagine glycosylation occurs at N6. The helical transmembrane segment at E18 to V43 threads the bilayer. Residues F44–N55 are Cytoplasmic-facing. A helical membrane pass occupies residues F56–F81. The Extracellular portion of the chain corresponds to S82–Y95. An intrachain disulfide couples C92 to C169. Residues A96–F115 traverse the membrane as a helical segment. Over C116–T134 the chain is Cytoplasmic. A helical membrane pass occupies residues V135 to S158. Residues S159 to S182 lie on the Extracellular side of the membrane. The helical transmembrane segment at Y183–K210 threads the bilayer. The Cytoplasmic portion of the chain corresponds to V211–F240. A helical membrane pass occupies residues I241 to A263. Over I264 to N271 the chain is Extracellular. A helical transmembrane segment spans residues S272–T295. K282 is modified (N6-(retinylidene)lysine). The Cytoplasmic segment spans residues N296–I399.

The protein belongs to the G-protein coupled receptor 1 family. Opsin subfamily. Phosphorylated on some or all of the serine and threonine residues present in the C-terminal region. In terms of tissue distribution, retina. Expressed in the hyperpolarizing cell layer of the photoreceptor cells with its photoreceptive region adjacent to the lens.

Its subcellular location is the membrane. Visual pigments are the light-absorbing molecules that mediate vision. They consist of an apoprotein, opsin, covalently linked to cis-retinal. This Mizuhopecten yessoensis (Japanese scallop) protein is Rhodopsin, G0-coupled (SCOP2).